Reading from the N-terminus, the 2168-residue chain is MGMQMSKNTAGSHTTVTQASGGSHINYTNINYYSHSASASQNKQDITQDPSKFTQPMVDIMKESAVPLKSPSAEACGYSDRVAQLTLGNSTITTQEAANITVAYGEWPSYLSDLDATAVDKTTKPGVSCDRFYTLPGKKWEATTKGWEWKLPDALTELGVFGQNCQFHFLYRCGWSIHVQCNATKFHQGTLLVVAVPDHQLGTTYQPEFDNVMPGKAGREVKYPYNFEDGTSLANSLIYPHQWINLRTNNSATLVLPYANAIPMDSPIRHSSWSLLVIPVVPLACATGTTPFVGITITLAPMFSEFSGLRRAIAQGIPTTNTPGSYQFLTTDEDSSACILPDFTPTQEIHIPGEVKNLQALCQVESLLEINNVDGKTGIERLRLEVSTQSELDRQLFALKVSFTEGEIMSKTLCGVMCSYYTQWSGSLEITFMFTGSFMTTGKLLLAYTPPGGSAPASREDAMLGTHVIWDFGLQSSITLVVPWICGGYYRDVNRANNYYAAGYVTGWFQTNMVIPPDFPSTAYILCFLAAQPNFSLRILKDRPDITQTAALQAPVETALNSAISSVIAGITAQDTQPSSHNISTSETPALQAAETGASSNASDEGMMETRHVVNTNTVSETSIESFYGRCGLVSIKEIADNKQVEKWLVNFNEFVQLRAKIELFTYMRFDIEFTLVATFTKGNSASQHPVQVQVMYLPPEQLLQLQQDSYAWQSAANPSAIFSANTVPARFSVPFVGTANAYTIMYDGYNVFGSNRPSADYGMINSSHMGSMAFRAISQLQATEKVKFMDLCQVKDVRAWCPRAPRMAPYKYIRNPVFETQDRIVPNRNNITTTGAFGQQSGAIYVGNYKIMNRHLATHEDWENVEWEDYNRDILVARTTAHGADKLARCHCNTGVYYCKSRNKHYPVTSRVQASIGSRLVSTTQLDTRPICSLPSGISEPGDCGGILRCQHGVIGIVTAGGQGVVGFADVRDLFWVEHEAMEQGLTDYIQQLGNSFGQGFTAEITNYASQLSEMLIGADGMVERCLQTFVKVISAVVIATRSQGDVPTILATLALIGCDGSPWRWLKRQFCGIFKIPYVEKQGDDWLKKFTSYVNAFKGLDWVAEKIMKFIDWMKNKLIPQARERQEFTTNLKTLPLLEAQVATLEHSCPTTEQQETIFGNIQYLAHHCRRYAPLYAAEARRVYALEKRILGYIQFKSKQRIEPVCLLIHGTAGTGKSLATSIIGRKLAEYEHSEVYAIPPDSDHFDGYQQQAVVVMDDLNQNPDGKDMVAFCQMVSTVPYHVPMAAIEEKGMLFTSSYVLASTNSGSIHPPTVSNSKALSRRFAFDVDIEVSEHYKTHNGTLDVVNATQRCEDCCPANFKTCMPLICGEAYQLVDRRNGMRYSIDTMISAMRAEWKRRNQVGLCYVRLFQGPPQFKPLKISVDPEIPAPPAIADLLASVDSEEVREYCKKKGWIVEVPVTATTLERNVSIATTILSSLVLLTSVITLVYLVYRLFAGYQGPYTGLPNAKPKPPVLREVRAQGPLMDFGVGMMKKNIVTVRTGAGEFTGLGVHDHVLVLPKHSHPAEIVVVDGKETPVEDAYNLTDEQGVSLELTLVTLKRNEKFRDIRAMIPENPCGTNEAVVCVNTSNFPNAFLPVGKVEYYGYLNLAGSPTHRTMMYNFPTKAGQCGGVVLSTGKVLGIHIGGNGAQGFCAALKRSYFTKPQGKIDWVEPSKKHGFPVINAPSKTKLEPSVFFDVFEGVKEPAALHPKDPRLEVNLEEALFSKYTGNVDIEMPEEMKEAVDHYANQLLALDIPTEPLSMEEAIYGTEGLEALDLTTSAGYPYVTMGIKKRDILNKETRDVKKMQECIDKYGLNLPMVTYIKDELRSKEKVKKGKSRLIEASSLNDSVAMRCYFGNLYKAFHQNPGTLTGCAVGCDPDTFWSKIPVMMDGELFGFDYTAYDASLSPLMFQALQMVLEKIGFGEGKHFIDNLCYSHHLFRDKYYFVKGGMPSGCSGTSIFNSMINNIIIRTVVLQTYKGIELDQLKIIAYGDDVIASYPYRIDPAELAKAGAKLGLHMTPPDKSETYVDLDWTNVTFLKRNFVPDEKYPFLVHPVMPMKEIYESIRWTRDARNTQDHVRSLCLLAWHNGRKEYEEFCRKIRSVPVGRALHLPSYSSLLREWYEKF.

Positions methionine 1–serine 20 are disordered. Glycine 2 carries N-myristoyl glycine; by host lipidation. Over glycine 2 to serine 1479 the chain is Cytoplasmic. Amphipathic alpha-helix regions lie at residues alanine 551–valine 567 and alanine 554–aspartate 575. The span at threonine 576–proline 589 shows a compositional bias: polar residues. A disordered region spans residues threonine 576–methionine 607. Residues histidine 856 and aspartate 874 each act as for protease 2A activity in the active site. Zn(2+) contacts are provided by cysteine 891 and cysteine 893. Residue cysteine 945 is the For protease 2A activity of the active site. Zn(2+) contacts are provided by cysteine 951 and histidine 953. Residues glycine 1085 to glutamine 1157 form a membrane-binding region. The interval glycine 1085–threonine 1223 is oligomerization. Residues alanine 1106–methionine 1110 are RNA-binding. The SF3 helicase domain occupies glutamate 1189 to valine 1347. Positions 1354, 1365, and 1370 each coordinate Zn(2+). The C4-type; degenerate zinc-finger motif lies at cysteine 1354 to cysteine 1370. The interval glutamate 1397–valine 1404 is RNA-binding. The interval tyrosine 1408–glutamine 1413 is oligomerization. Residues serine 1480–tyrosine 1495 lie within the membrane without spanning it. The Cytoplasmic portion of the chain corresponds to arginine 1496–phenylalanine 2168. Position 1505 is an O-(5'-phospho-RNA)-tyrosine (tyrosine 1505). Positions glycine 1525 to phenylalanine 1703 constitute a Peptidase C3 domain. Active-site for protease 3C activity residues include histidine 1564, glutamate 1595, and cysteine 1671. The RdRp catalytic domain occupies glycine 1934–alanine 2048. The Mg(2+) site is built by aspartate 1940 and aspartate 2035.

The protein belongs to the picornaviruses polyprotein family. Interacts with capsid protein VP1 and capsid protein VP3 to form heterotrimeric protomers. In terms of assembly, interacts with capsid protein VP0, and capsid protein VP3 to form heterotrimeric protomers. Five protomers subsequently associate to form pentamers which serve as building blocks for the capsid. Interacts with capsid protein VP2, capsid protein VP3 and capsid protein VP4 following cleavage of capsid protein VP0. As to quaternary structure, interacts with capsid protein VP1 and capsid protein VP3 in the mature capsid. Interacts with capsid protein VP0 and capsid protein VP1 to form heterotrimeric protomers. Five protomers subsequently associate to form pentamers which serve as building blocks for the capsid. Interacts with capsid protein VP4 in the mature capsid. Interacts with protein 2C; this interaction may be important for virion morphogenesis. In terms of assembly, interacts with capsid protein VP1 and capsid protein VP3. As to quaternary structure, homodimer. Homohexamer; forms a hexameric ring structure with 6-fold symmetry characteristic of AAA+ ATPases. Interacts (via N-terminus) with host RTN3 (via reticulon domain); this interaction is important for viral replication. Interacts with capsid protein VP3; this interaction may be important for virion morphogenesis. In terms of assembly, interacts with protein 3CD. As to quaternary structure, homodimer. Interacts with host GBF1. Interacts (via GOLD domain) with host ACBD3 (via GOLD domain); this interaction allows the formation of a viral protein 3A/ACBD3 heterotetramer with a 2:2 stoichiometry, which will stimulate the recruitment of host PI4KB in order to synthesize PI4P at the viral RNA replication sites. Interacts with RNA-directed RNA polymerase. In terms of assembly, interacts with protein 3AB and with RNA-directed RNA polymerase. As to quaternary structure, interacts with Viral protein genome-linked and with protein 3CD. The cofactor is Mg(2+). Specific enzymatic cleavages in vivo by the viral proteases yield processing intermediates and the mature proteins. In terms of processing, myristoylation is required for the formation of pentamers during virus assembly. Further assembly of 12 pentamers and a molecule of genomic RNA generates the provirion. Post-translationally, during virion maturation, immature virions are rendered infectious following cleavage of VP0 into VP4 and VP2. This maturation seems to be an autocatalytic event triggered by the presence of RNA in the capsid and it is followed by a conformational change infectious virion. Myristoylation is required during RNA encapsidation and formation of the mature virus particle. In terms of processing, VPg is uridylylated by the polymerase into VPg-pUpU. This acts as a nucleotide-peptide primer for the genomic RNA replication.

Its subcellular location is the virion. The protein resides in the host cytoplasm. It is found in the host cytoplasmic vesicle membrane. The protein localises to the host nucleus. It catalyses the reaction a ribonucleoside 5'-triphosphate + H2O = a ribonucleoside 5'-diphosphate + phosphate + H(+). The enzyme catalyses Selective cleavage of Tyr-|-Gly bond in the picornavirus polyprotein.. It carries out the reaction RNA(n) + a ribonucleoside 5'-triphosphate = RNA(n+1) + diphosphate. The catalysed reaction is Selective cleavage of Gln-|-Gly bond in the poliovirus polyprotein. In other picornavirus reactions Glu may be substituted for Gln, and Ser or Thr for Gly.. With respect to regulation, replication or transcription is subject to high level of random mutations by the nucleotide analog ribavirin. In terms of biological role, forms an icosahedral capsid of pseudo T=3 symmetry with capsid proteins VP2 and VP3. The capsid is 300 Angstroms in diameter, composed of 60 copies of each capsid protein and enclosing the viral positive strand RNA genome. Capsid protein VP1 mainly forms the vertices of the capsid. Capsid protein VP1 interacts with host cell receptor to provide virion attachment to target host cells. This attachment induces virion internalization. Tyrosine kinases are probably involved in the entry process. After binding to its receptor, the capsid undergoes conformational changes. Capsid protein VP1 N-terminus (that contains an amphipathic alpha-helix) and capsid protein VP4 are externalized. Together, they shape a pore in the host membrane through which viral genome is translocated to host cell cytoplasm. Functionally, forms an icosahedral capsid of pseudo T=3 symmetry with capsid proteins VP2 and VP3. The capsid is 300 Angstroms in diameter, composed of 60 copies of each capsid protein and enclosing the viral positive strand RNA genome. Its function is as follows. Lies on the inner surface of the capsid shell. After binding to the host receptor, the capsid undergoes conformational changes. Capsid protein VP4 is released, Capsid protein VP1 N-terminus is externalized, and together, they shape a pore in the host membrane through which the viral genome is translocated into the host cell cytoplasm. Component of immature procapsids, which is cleaved into capsid proteins VP4 and VP2 after maturation. Allows the capsid to remain inactive before the maturation step. In terms of biological role, cysteine protease that cleaves viral polyprotein and specific host proteins. It is responsible for the autocatalytic cleavage between the P1 and P2 regions, which is the first cleavage occurring in the polyprotein. Also cleaves the host translation initiation factor EIF4G1, in order to shut down the capped cellular mRNA translation. Inhibits the host nucleus-cytoplasm protein and RNA trafficking by cleaving host members of the nuclear pores. Counteracts stress granule formation probably by antagonizing its assembly or promoting its dissassembly. Functionally, plays an essential role in the virus replication cycle by acting as a viroporin. Creates a pore in the host endoplasmic reticulum and as a consequence releases Ca2+ in the cytoplasm of infected cell. In turn, high levels of cytoplasmic calcium may trigger membrane trafficking and transport of viral ER-associated proteins to viroplasms, sites of viral genome replication. Its function is as follows. Induces and associates with structural rearrangements of intracellular membranes. Displays RNA-binding, nucleotide binding and NTPase activities. May play a role in virion morphogenesis and viral RNA encapsidation by interacting with the capsid protein VP3. Localizes the viral replication complex to the surface of membranous vesicles. Together with protein 3CD binds the Cis-Active RNA Element (CRE) which is involved in RNA synthesis initiation. Acts as a cofactor to stimulate the activity of 3D polymerase, maybe through a nucleid acid chaperone activity. In terms of biological role, localizes the viral replication complex to the surface of membranous vesicles. It inhibits host cell endoplasmic reticulum-to-Golgi apparatus transport and causes the disassembly of the Golgi complex, possibly through GBF1 interaction. This would result in depletion of MHC, trail receptors and IFN receptors at the host cell surface. Plays an essential role in viral RNA replication by recruiting ACBD3 and PI4KB at the viral replication sites, thereby allowing the formation of the rearranged membranous structures where viral replication takes place. Functionally, acts as a primer for viral RNA replication and remains covalently bound to viral genomic RNA. VPg is uridylylated prior to priming replication into VPg-pUpU. The oriI viral genomic sequence may act as a template for this. The VPg-pUpU is then used as primer on the genomic RNA poly(A) by the RNA-dependent RNA polymerase to replicate the viral genome. During genome replication, the VPg-RNA linkage is removed by the host TDP2, thereby accelerating replication. During the late stage of the replication cycle, host TDP2 is excluded from sites of viral RNA synthesis and encapsidation, allowing for the generation of progeny virions. Its function is as follows. Involved in the viral replication complex and viral polypeptide maturation. It exhibits protease activity with a specificity and catalytic efficiency that is different from protease 3C. Protein 3CD lacks polymerase activity. Protein 3CD binds to the 5'UTR of the viral genome. Replicates the viral genomic RNA on the surface of intracellular membranes. May form linear arrays of subunits that propagate along a strong head-to-tail interaction called interface-I. Covalently attaches UMP to a tyrosine of VPg, which is used to prime RNA synthesis. The positive stranded RNA genome is first replicated at virus induced membranous vesicles, creating a dsRNA genomic replication form. This dsRNA is then used as template to synthesize positive stranded RNA genomes. ss(+)RNA genomes are either translated, replicated or encapsidated. In terms of biological role, major viral protease that mediates proteolytic processing of the polyprotein. Cleaves host EIF5B, contributing to host translation shutoff. Also cleaves host PABPC1, contributing to host translation shutoff. Cleaves host NLRP1, triggers host N-glycine-mediated degradation of the autoinhibitory NLRP1 N-terminal fragment. The protein is Genome polyprotein of Sus scrofa (Pig).